A 115-amino-acid polypeptide reads, in one-letter code: Histidine-rich carboxyl terminus protein 1 (115 aa).

The chain crosses the membrane as a helical span at residues 9-29 (ALVGWITGAAVAVLLLLLLLA). Positions 86–115 (GLHHHHHPRHTPHHLHHHHHPHRHHPRHAR) are disordered. The segment covering 87 to 115 (LHHHHHPRHTPHHLHHHHHPHRHHPRHAR) has biased composition (basic residues).

It localises to the membrane. The polypeptide is Histidine-rich carboxyl terminus protein 1 (HRCT1) (Homo sapiens (Human)).